The chain runs to 333 residues: 4-hydroxyproline epimerase (333 aa).

Residue Cys90 is the Proton acceptor of the active site. Residues 91–92 (GH) and Asp249 each bind substrate. The Proton donor role is filled by Cys253. 254–255 (GT) is a substrate binding site.

This sequence belongs to the proline racemase family. As to quaternary structure, homodimer.

It carries out the reaction trans-4-hydroxy-L-proline = cis-4-hydroxy-D-proline. Allows intracellular utilization of 4-hydroxyproline, one of the major constituents of host collagen, by converting 4-hydroxy-L-proline to 4-hydroxy-D-proline, which can be further metabolized by intracellular 4-hydroxy-D-proline oxidases. Strong B-cell mitogen. Plays an important role in the regulation of intra- and extracellular amino acid pools, allowing the bacterium to profit from host precursors and enzymatic pathways. The chain is 4-hydroxyproline epimerase from Brucella canis (strain ATCC 23365 / NCTC 10854 / RM-666).